The sequence spans 241 residues: Small ribosomal subunit protein bS6 (241 aa).

A compositionally biased stretch (basic residues) spans 97 to 108 (KPKIRERNRKYT). The interval 97 to 241 (KPKIRERNRK…YNNKKPQSSN (145 aa)) is disordered. The span at 109-118 (PRRDRFEKPN) shows a compositional bias: basic and acidic residues. Low complexity-rich tracts occupy residues 130–151 (QDQQ…QTSQ) and 161–182 (DDFQ…NQSG). Residues 189–202 (RQNQENIHQNSKNH) are compositionally biased toward polar residues.

This sequence belongs to the bacterial ribosomal protein bS6 family.

Binds together with bS18 to 16S ribosomal RNA. This Mesomycoplasma hyopneumoniae (strain 232) (Mycoplasma hyopneumoniae) protein is Small ribosomal subunit protein bS6.